The chain runs to 175 residues: Translation initiation factor IF-3, chloroplastic (175 aa).

The protein belongs to the IF-3 family. As to quaternary structure, monomer.

It localises to the plastid. The protein resides in the chloroplast. Functionally, IF-3 binds to the 30S ribosomal subunit and shifts the equilibrium between 70S ribosomes and their 50S and 30S subunits in favor of the free subunits, thus enhancing the availability of 30S subunits on which protein synthesis initiation begins. In Cyanidioschyzon merolae (strain NIES-3377 / 10D) (Unicellular red alga), this protein is Translation initiation factor IF-3, chloroplastic.